Reading from the N-terminus, the 509-residue chain is Maturase K (509 aa).

It belongs to the intron maturase 2 family. MatK subfamily.

It is found in the plastid. The protein localises to the chloroplast. In terms of biological role, usually encoded in the trnK tRNA gene intron. Probably assists in splicing its own and other chloroplast group II introns. This chain is Maturase K, found in Arpophyllum giganteum (Hyacinth orchid).